We begin with the raw amino-acid sequence, 270 residues long: Glutamate racemase (270 aa).

Residues 7–8 (DS) and 39–40 (YG) contribute to the substrate site. The Proton donor/acceptor role is filled by C70. 71–72 (NT) lines the substrate pocket. The active-site Proton donor/acceptor is the C194. 195–196 (TH) is a substrate binding site.

This sequence belongs to the aspartate/glutamate racemases family.

It carries out the reaction L-glutamate = D-glutamate. Its pathway is cell wall biogenesis; peptidoglycan biosynthesis. Provides the (R)-glutamate required for cell wall biosynthesis. In Cereibacter sphaeroides (strain ATCC 17025 / ATH 2.4.3) (Rhodobacter sphaeroides), this protein is Glutamate racemase.